A 468-amino-acid chain; its full sequence is MKINSPLEAYKYLPQTNCGECGEPTCMAFASKLIDRSGKTSDCPPLVKEKKYAKKLAELDRLLAPEIRQVTIGVGEKAANIGGDDVLYRHKLTFFNKTKMFFDVSDNMEEDALIERVKKIADFKKFYVGRNLLLDGVAIKATSNDPAKFAAAVKKVAEIGLPMIFCSFNPAVLKAGLEVAKDKNPLLYAANKDNWKEVGELALEYKVPVVVSVFNDLDGLKSLAKTFAEAGIKDIVLDPGTYPSGKGLKDTFTNFLKIRRAGIMGDTEIAYPIMALPLTAWMAGISDPVSASYWETVIASVFTIRYGDIMILHSLEPYAALPEMHLAETIYTDPRTPVSVDGGMYKVGEPDKDSPVFFTTNFALTYYTVESDISANGIVCWLLAVDTDGIGVEAAVAGGQLTSAKVKDAFEKAGFDLKTDTNHNTLIIPGLSARLQGDLEDTLGANVKVGPMDSGRIPGWVEKNWPPK.

The region spanning 1–61 is the 4Fe-4S domain; it reads MKINSPLEAY…YAKKLAELDR (61 aa). Residues Cys-18, Cys-21, Cys-26, and Cys-43 each coordinate [4Fe-4S] cluster.

Heterodimer of delta and gamma chains. The ACDS complex is made up of alpha, epsilon, beta, gamma and delta chains with a probable stoichiometry of (alpha(2)epsilon(2))(4)-beta(8)-(gamma(1)delta(1))(8). Requires corrinoid as cofactor. It depends on [4Fe-4S] cluster as a cofactor.

It catalyses the reaction 5,6,7,8-tetrahydrosarcinapterin + methyl-Co(III)-[corrinoid Fe-S protein] = 5-methyltetrahydrosarcinapterin + Co(I)-[corrinoid Fe-S protein] + H(+). Its pathway is one-carbon metabolism; methanogenesis from acetate. Functionally, part of a complex that catalyzes the reversible cleavage of acetyl-CoA, allowing growth on acetate as sole source of carbon and energy. The protein is Acetyl-CoA decarbonylase/synthase complex subunit gamma 1 of Methanosarcina thermophila.